Consider the following 61-residue polypeptide: Small ribosomal subunit protein uS14 (61 aa).

Zn(2+)-binding residues include cysteine 24, cysteine 27, cysteine 40, and cysteine 43.

Belongs to the universal ribosomal protein uS14 family. Zinc-binding uS14 subfamily. In terms of assembly, part of the 30S ribosomal subunit. Contacts proteins S3 and S10. Zn(2+) is required as a cofactor.

Its function is as follows. Binds 16S rRNA, required for the assembly of 30S particles and may also be responsible for determining the conformation of the 16S rRNA at the A site. In Natranaerobius thermophilus (strain ATCC BAA-1301 / DSM 18059 / JW/NM-WN-LF), this protein is Small ribosomal subunit protein uS14.